A 237-amino-acid chain; its full sequence is MSIHISAKKGDIADKILLPGDPLRAKFIAENFLEDAVCFNEVRNMFGYTGTYKGHRVSVMGTGMGMPSISIYARELIVDYGVKTLIRVGTAGAIDPEVHVRELVLAQAAATNSNIIRNDFPEFDFPQIADFGLLDKAYHIAREMGVTTHVGNVLSSDVFYTNMPERNMALGKLGVKAIEMEAAALYYLAAQHHVKALGIMTISDNLNDPTEDTTAEERQTTFTDMMKVGLETLIAND.

His-4 provides a ligand contact to a purine D-ribonucleoside. Residues Gly-20, Arg-24, Arg-43, and 87-90 contribute to the phosphate site; that span reads RVGT. Residues 179–181 and 203–204 contribute to the a purine D-ribonucleoside site; these read EME and SD. Asp-204 acts as the Proton donor in catalysis.

Belongs to the PNP/UDP phosphorylase family. In terms of assembly, homohexamer; trimer of homodimers.

It catalyses the reaction a purine D-ribonucleoside + phosphate = a purine nucleobase + alpha-D-ribose 1-phosphate. It carries out the reaction a purine 2'-deoxy-D-ribonucleoside + phosphate = a purine nucleobase + 2-deoxy-alpha-D-ribose 1-phosphate. Its function is as follows. Catalyzes the reversible phosphorolytic breakdown of the N-glycosidic bond in the beta-(deoxy)ribonucleoside molecules, with the formation of the corresponding free purine bases and pentose-1-phosphate. The sequence is that of Purine nucleoside phosphorylase DeoD-type from Streptococcus pyogenes serotype M12 (strain MGAS2096).